The chain runs to 231 residues: Potassium/proton antiporter CemA (231 aa).

4 helical membrane-spanning segments follow: residues 7–27 (FISL…SLSF), 116–136 (IISF…LIFL), 156–176 (ILLL…ELMI), and 191–211 (IISG…KYWI).

Belongs to the CemA family.

It localises to the plastid. Its subcellular location is the chloroplast inner membrane. The catalysed reaction is K(+)(in) + H(+)(out) = K(+)(out) + H(+)(in). Functionally, contributes to K(+)/H(+) antiport activity by supporting proton efflux to control proton extrusion and homeostasis in chloroplasts in a light-dependent manner to modulate photosynthesis. Prevents excessive induction of non-photochemical quenching (NPQ) under continuous-light conditions. Indirectly promotes efficient inorganic carbon uptake into chloroplasts. This Morus indica (Mulberry) protein is Potassium/proton antiporter CemA.